A 336-amino-acid polypeptide reads, in one-letter code: Ketol-acid reductoisomerase (NADP(+)) (336 aa).

A KARI N-terminal Rossmann domain is found at 1–182 (MAVIYYDKDA…GVTRAGVIET (182 aa)). NADP(+)-binding positions include 25–28 (FGSQ), Arg-48, Ser-51, Ser-53, and 83–86 (DEHQ). Residue His-108 is part of the active site. Gly-134 provides a ligand contact to NADP(+). One can recognise a KARI C-terminal knotted domain in the interval 183 to 328 (TFKEETETDL…KELRKMMPWL (146 aa)). The Mg(2+) site is built by Asp-191, Glu-195, Glu-227, and Glu-231. Ser-252 is a substrate binding site.

The protein belongs to the ketol-acid reductoisomerase family. Mg(2+) serves as cofactor.

The catalysed reaction is (2R)-2,3-dihydroxy-3-methylbutanoate + NADP(+) = (2S)-2-acetolactate + NADPH + H(+). It carries out the reaction (2R,3R)-2,3-dihydroxy-3-methylpentanoate + NADP(+) = (S)-2-ethyl-2-hydroxy-3-oxobutanoate + NADPH + H(+). It participates in amino-acid biosynthesis; L-isoleucine biosynthesis; L-isoleucine from 2-oxobutanoate: step 2/4. The protein operates within amino-acid biosynthesis; L-valine biosynthesis; L-valine from pyruvate: step 2/4. In terms of biological role, involved in the biosynthesis of branched-chain amino acids (BCAA). Catalyzes an alkyl-migration followed by a ketol-acid reduction of (S)-2-acetolactate (S2AL) to yield (R)-2,3-dihydroxy-isovalerate. In the isomerase reaction, S2AL is rearranged via a Mg-dependent methyl migration to produce 3-hydroxy-3-methyl-2-ketobutyrate (HMKB). In the reductase reaction, this 2-ketoacid undergoes a metal-dependent reduction by NADPH to yield (R)-2,3-dihydroxy-isovalerate. In Thermotoga neapolitana (strain ATCC 49049 / DSM 4359 / NBRC 107923 / NS-E), this protein is Ketol-acid reductoisomerase (NADP(+)).